Here is a 321-residue protein sequence, read N- to C-terminus: Cytochrome c biogenesis protein CcsA (321 aa).

7 helical membrane-spanning segments follow: residues 9-29, 44-64, 68-88, 143-163, 226-246, 260-274, and 289-309; these read ILTH…LITL, GMIA…ASSG, LSNL…LHMI, MLLS…LLMI, VISL…VWAN, TWAF…IYLH, and VASI…LLGI.

The protein belongs to the CcmF/CycK/Ccl1/NrfE/CcsA family. In terms of assembly, may interact with Ccs1.

It is found in the plastid. It localises to the chloroplast thylakoid membrane. In terms of biological role, required during biogenesis of c-type cytochromes (cytochrome c6 and cytochrome f) at the step of heme attachment. The sequence is that of Cytochrome c biogenesis protein CcsA from Oryza sativa (Rice).